We begin with the raw amino-acid sequence, 684 residues long: Glycine--tRNA ligase beta subunit (684 aa).

It belongs to the class-II aminoacyl-tRNA synthetase family. Tetramer of two alpha and two beta subunits.

Its subcellular location is the cytoplasm. It catalyses the reaction tRNA(Gly) + glycine + ATP = glycyl-tRNA(Gly) + AMP + diphosphate. This Stutzerimonas stutzeri (strain A1501) (Pseudomonas stutzeri) protein is Glycine--tRNA ligase beta subunit.